A 266-amino-acid chain; its full sequence is Arcelin-4 (266 aa).

Residues Met1 to Ser21 form the signal peptide. N-linked (GlcNAc...) asparagine glycans are attached at residues Asn28 and Asn92.

It belongs to the leguminous lectin family.

Its function is as follows. Seed storage. This carbohydrate-binding lectin has toxic effects on the important bean bruchid pests, Z.subfasciatus and A.obtectus. This is Arcelin-4 (ARC4) from Phaseolus vulgaris (Kidney bean).